The sequence spans 892 residues: Translation initiation factor IF-2 (892 aa).

2 disordered regions span residues 144–176 (QQRL…QKTE) and 189–298 (SNSV…SGAH). Over residues 207–219 (LPRTVRPTPAARP) the composition is skewed to low complexity. The region spanning 391–560 (PRPPVVTIMG…SIQAEVLELK (170 aa)) is the tr-type G domain. Residues 400 to 407 (GHVDHGKT), 446 to 450 (DTPGH), and 500 to 503 (SKID) contribute to the GTP site.

It belongs to the TRAFAC class translation factor GTPase superfamily. Classic translation factor GTPase family. IF-2 subfamily.

The protein resides in the cytoplasm. One of the essential components for the initiation of protein synthesis. Protects formylmethionyl-tRNA from spontaneous hydrolysis and promotes its binding to the 30S ribosomal subunits. Also involved in the hydrolysis of GTP during the formation of the 70S ribosomal complex. This is Translation initiation factor IF-2 from Xylella fastidiosa (strain M12).